Reading from the N-terminus, the 429-residue chain is Integral membrane protein GPR137C (429 aa).

Positions 1–17 are enriched in low complexity; it reads MRVSVPGPAAAAAPAAG. The tract at residues 1–29 is disordered; sequence MRVSVPGPAAAAAPAAGREPSTPGGGSGG. Topologically, residues 1-48 are lumenal; that stretch reads MRVSVPGPAAAAAPAAGREPSTPGGGSGGGGAVAAASGAAVPGSVQLA. A helical membrane pass occupies residues 49 to 69; sequence LSVLHALLYAALFAFAYLQLW. Residues 70–83 lie on the Cytoplasmic side of the membrane; the sequence is RLLLYRERRLSYQS. The helical transmembrane segment at 84-104 threads the bilayer; the sequence is LCLFLCLLWAALRTTLFSAAF. The Lumenal portion of the chain corresponds to 105–120; sequence SLSGSLPLLRPPAHLH. A helical transmembrane segment spans residues 121–141; sequence FFPHWLLYCFPSCLQFSTLCL. At 142–167 the chain is on the cytoplasmic side; it reads LNLYLAEVICKVRCATELDRHKILLH. The chain crosses the membrane as a helical span at residues 168-188; it reads LGFIMASLLFLVVNLTCAMLV. At 189–205 the chain is on the lumenal side; that stretch reads HGDVPENQLKWTVFVRA. The chain crosses the membrane as a helical span at residues 206–226; sequence LINDSLFILCAISLVCYICKI. Residues 227–246 lie on the Cytoplasmic side of the membrane; sequence TKMSSANVYLESKGMSLCQT. The helical transmembrane segment at 247–267 threads the bilayer; sequence VVVGSVVILLYSSRACYNLVV. At 268–300 the chain is on the lumenal side; sequence VTISQDTLESPFNYGWDNLSDKAHVEDISGEEY. Asparagine 285 is a glycosylation site (N-linked (GlcNAc...) asparagine). The chain crosses the membrane as a helical span at residues 301–321; that stretch reads IVFGMVLFLWEHVPAWSVVLF. At 322-429 the chain is on the cytoplasmic side; that stretch reads FRAQRLNQNL…HHSLYVTPQN (108 aa).

Belongs to the GPR137 family.

The protein localises to the lysosome membrane. Lysosomal integral membrane protein that may regulate MTORC1 complex translocation to lysosomes. In Homo sapiens (Human), this protein is Integral membrane protein GPR137C (GPR137C).